The sequence spans 188 residues: MWYTTVRNPSIALIKQGYHILAEYNLVKEELKNIYAIPSYACGLHWFGVIFVHSGIYAGSVFRFSILLPDNFPVDISLPTVVFSTAVLHPHICPQNKTLDLAHFLNEWRKDEHHIWHPYCAERHLKFMDQLKSPCWKEATSMDCSQPSQYLGHIDSSRQLDEEEANQVVKLHCGRVPEPQREAAEVSL.

The UBC core domain occupies 15-174; sequence KQGYHILAEY…ANQVVKLHCG (160 aa).

This sequence belongs to the ubiquitin-conjugating enzyme family. FTS subfamily.

The polypeptide is Protein crossbronx-like (Drosophila simulans (Fruit fly)).